A 444-amino-acid polypeptide reads, in one-letter code: UDP-N-acetylmuramate--L-alanine ligase (444 aa).

Residue 110–116 (GAHGKTS) coordinates ATP.

It belongs to the MurCDEF family.

The protein resides in the cytoplasm. The catalysed reaction is UDP-N-acetyl-alpha-D-muramate + L-alanine + ATP = UDP-N-acetyl-alpha-D-muramoyl-L-alanine + ADP + phosphate + H(+). The protein operates within cell wall biogenesis; peptidoglycan biosynthesis. Functionally, cell wall formation. The sequence is that of UDP-N-acetylmuramate--L-alanine ligase from Streptococcus pneumoniae (strain CGSP14).